The primary structure comprises 760 residues: Exostosin-1 (760 aa).

The Cytoplasmic portion of the chain corresponds to 1–6; it reads MQAKKR. The helical; Signal-anchor for type II membrane protein transmembrane segment at 7 to 25 threads the bilayer; that stretch reads YILVFVSCAFLAYAYFGGY. At 26–760 the chain is on the lumenal side; sequence RLKVSPLRPR…KYRQIELVGS (735 aa). N-linked (GlcNAc...) asparagine glycosylation is found at Asn-71 and Asn-327. A UDP-N-acetyl-alpha-D-glucosamine-binding site is contributed by Arg-437. Asn-476 carries an N-linked (GlcNAc...) asparagine glycan. Residues 540-560 are disordered; sequence LGGSTRSQGAGPTSQTTEGRP. Residues 541–560 are compositionally biased toward polar residues; the sequence is GGSTRSQGAGPTSQTTEGRP. The UDP-N-acetyl-alpha-D-glucosamine site is built by Arg-565, Asp-581, Glu-582, Asp-583, Glu-669, Asp-670, and Arg-713. Asp-583 is a Mn(2+) binding site. Cysteines 668 and 716 form a disulfide. Asp-670 is an active-site residue.

It belongs to the glycosyltransferase 47 family. Interacts with sau. Mn(2+) serves as cofactor. In terms of tissue distribution, ubiquitously expressed in early embryos. Later (in stage 10 embryos), it is expressed at higher level in the nervous system. Ubiquitously expressed in wing imaginal disk.

Its subcellular location is the endoplasmic reticulum membrane. It localises to the golgi apparatus membrane. It carries out the reaction 3-O-{[(1-&gt;4)-beta-D-GlcA-(1-&gt;4)-alpha-D-GlcNAc](n)-(1-&gt;4)-beta-D-GlcA-(1-&gt;3)-beta-D-Gal-(1-&gt;3)-beta-D-Gal-(1-&gt;4)-beta-D-Xyl}-L-seryl-[protein] + UDP-N-acetyl-alpha-D-glucosamine = 3-O-{alpha-D-GlcNAc-[(1-&gt;4)-beta-D-GlcA-(1-&gt;4)-alpha-D-GlcNAc](n)-(1-&gt;4)-beta-D-GlcA-(1-&gt;3)-beta-D-Gal-(1-&gt;3)-beta-D-Gal-(1-&gt;4)-beta-D-Xyl}-L-seryl-[protein] + UDP + H(+). It catalyses the reaction 3-O-{alpha-D-GlcNAc-[(1-&gt;4)-beta-D-GlcA-(1-&gt;4)-alpha-D-GlcNAc](n)-(1-&gt;4)-beta-D-GlcA-(1-&gt;3)-beta-D-Gal-(1-&gt;3)-beta-D-Gal-(1-&gt;4)-beta-D-Xyl}-L-seryl-[protein] + UDP-alpha-D-glucuronate = 3-O-{[(1-&gt;4)-beta-D-GlcA-(1-&gt;4)-alpha-D-GlcNAc](n+1)-(1-&gt;4)-beta-D-GlcA-(1-&gt;3)-beta-D-Gal-(1-&gt;3)-beta-D-Gal-(1-&gt;4)-beta-D-Xyl}-L-seryl-[protein] + UDP + H(+). It functions in the pathway protein modification; protein glycosylation. It participates in glycan metabolism; heparan sulfate biosynthesis. The protein operates within glycan metabolism; heparin biosynthesis. In terms of biological role, glycosyltransferase required for the biosynthesis of heparan-sulfate and responsible for the alternating addition of beta-1-4-linked glucuronic acid (GlcA) and alpha-1-4-linked N-acetylglucosamine (GlcNAc) units to nascent heparan sulfate chains. Botv is the trigger of heparan sulfate chain initiation and polymerization takes place by a complex of ttv and sotv. Plays a central role in the diffusion of morphogens hedgehog (hh), wingless (wg) and decapentaplegic (dpp) via its role in heparan sulfate proteoglycans (HSPGs) biosynthesis which are required for movement of hh, dpp and wg morphogens. The sequence is that of Exostosin-1 (ttv) from Drosophila melanogaster (Fruit fly).